The primary structure comprises 204 residues: LexA repressor (204 aa).

The H-T-H motif DNA-binding region spans 28-48; sequence VREIGEAVGLASSSTVHGHLD. Residues S126 and K164 each act as for autocatalytic cleavage activity in the active site.

It belongs to the peptidase S24 family. Homodimer.

It catalyses the reaction Hydrolysis of Ala-|-Gly bond in repressor LexA.. In terms of biological role, represses a number of genes involved in the response to DNA damage (SOS response), including recA and lexA. In the presence of single-stranded DNA, RecA interacts with LexA causing an autocatalytic cleavage which disrupts the DNA-binding part of LexA, leading to derepression of the SOS regulon and eventually DNA repair. In Exiguobacterium sibiricum (strain DSM 17290 / CCUG 55495 / CIP 109462 / JCM 13490 / 255-15), this protein is LexA repressor.